A 462-amino-acid chain; its full sequence is MTRLSFTVLIFLAAYFGSNIRPNVATLDPKTVCYYESWVHWRQGDGKMDPEDIDTSLCSHIVYSYFGIDASSHEIKLLDQYLMITLHDMEHFTKHKGNAKAMIAVGGASMSDQFSKTAAVEHYRETFVVSTIDLMTKYGFDGVMIDWSGMQAKDSDNFVKLLDKFDEKFAQTSFVMGVTLPATIASYDNYNIPAISNYVDFMNVLTLDYDGPWAYTVGHASALPEQLKTLEAYNKRGAPRHKMVMAVPFFARTWILEKMDKQDVGDKASGPGPKGQFTQTPGFLSYNELCVQIQAETNAFSITRDHDNTAIYAVYVHDNHAEWISFEDRHTLGDKARNITEQGYGGMSVYTLSNEDVHGVCGDKNPLLHAINSNYFRGIVTEPTVVTVTPVTHTTEHVTDIPGVFHCHQEGFFRDKTYCAKYYECKKGDFGLEQTVHHCPNHSQAFDEVSRTCVDHAKIPGC.

A signal peptide spans 1 to 25; it reads MTRLSFTVLIFLAAYFGSNIRPNVA. The 350-residue stretch at 29–378 folds into the GH18 domain; it reads PKTVCYYESW…HAINSNYFRG (350 aa). The cysteines at positions 33 and 58 are disulfide-linked. 2 N-linked (GlcNAc...) asparagine glycosylation sites follow: asparagine 338 and asparagine 441. Residues 404–462 form the Chitin-binding type-2 domain; sequence VFHCHQEGFFRDKTYCAKYYECKKGDFGLEQTVHHCPNHSQAFDEVSRTCVDHAKIPGC. Cysteines 439 and 453 form a disulfide.

It belongs to the glycosyl hydrolase 18 family. Chitinase class II subfamily. Expressed in the peritrophic matrix of the midgut, and only very weakly in fecal pellets.

It is found in the secreted. Functionally, probably a non-catalytic chitinase-like protein, which binds to insoluble chitin and enhances the activity of the catalytic chitinases. Has weak chitin-binding activity. This chain is Chitinase-like mite allergen Der p 18.0101, found in Dermatophagoides pteronyssinus (European house dust mite).